A 123-amino-acid chain; its full sequence is Small ribosomal subunit protein uS13 (123 aa).

The interval 95–123 (GLPVRGQRTKTNARTRKGPIKTVGAKRKK) is disordered.

It belongs to the universal ribosomal protein uS13 family. In terms of assembly, part of the 30S ribosomal subunit. Forms a loose heterodimer with protein S19. Forms two bridges to the 50S subunit in the 70S ribosome.

Its function is as follows. Located at the top of the head of the 30S subunit, it contacts several helices of the 16S rRNA. In the 70S ribosome it contacts the 23S rRNA (bridge B1a) and protein L5 of the 50S subunit (bridge B1b), connecting the 2 subunits; these bridges are implicated in subunit movement. Contacts the tRNAs in the A and P-sites. This Desulfitobacterium hafniense (strain DSM 10664 / DCB-2) protein is Small ribosomal subunit protein uS13.